We begin with the raw amino-acid sequence, 207 residues long: Interferon kappa (207 aa).

The signal sequence occupies residues 1-27; sequence MSTKPDMIQKCLWLEILMGIFIAGTLS. Cystine bridges form between Cys30/Cys128 and Cys59/Cys181. The stretch at 118–148 forms a coiled coil; sequence LDQQAEYLNQCLEEDKNENEDMKEMKENEMK.

This sequence belongs to the alpha/beta interferon family. In terms of tissue distribution, expressed in keratinocytes, monocytes and in resting dendritic cells.

The protein resides in the secreted. Functionally, may play a role in the regulation of immune cell function. Cytokine that imparts cellular protection against viral infection in a species-specific manner. Activates the interferon-stimulated response element signaling pathway. It is able to directly modulate cytokine release from monocytes and dendritic cells. Binds heparin. In Homo sapiens (Human), this protein is Interferon kappa (IFNK).